A 229-amino-acid chain; its full sequence is ATP synthase subunit a (229 aa).

Transmembrane regions (helical) follow at residues 14–34 (LIAI…ALIL), 68–88 (YFPF…LGLF), 98–118 (IVVT…GGLW), 124–144 (FLSI…LVLI), 157–179 (GVRL…GFGF), and 189–209 (NIFP…VAVI).

It belongs to the ATPase A chain family. As to quaternary structure, F-type ATPases have 2 components, CF(1) - the catalytic core - and CF(0) - the membrane proton channel. CF(1) has five subunits: alpha(3), beta(3), gamma(1), delta(1), epsilon(1). CF(0) has three main subunits: a, b and c.

The protein localises to the mitochondrion inner membrane. Mitochondrial membrane ATP synthase (F(1)F(0) ATP synthase or Complex V) produces ATP from ADP in the presence of a proton gradient across the membrane which is generated by electron transport complexes of the respiratory chain. F-type ATPases consist of two structural domains, F(1) - containing the extramembraneous catalytic core and F(0) - containing the membrane proton channel, linked together by a central stalk and a peripheral stalk. During catalysis, ATP synthesis in the catalytic domain of F(1) is coupled via a rotary mechanism of the central stalk subunits to proton translocation. Key component of the proton channel; it may play a direct role in the translocation of protons across the membrane. The chain is ATP synthase subunit a (ATPASE6) from Metridium senile (Brown sea anemone).